A 306-amino-acid chain; its full sequence is D-alanine--D-alanine ligase (306 aa).

Positions 107–303 (KHLFKSAGLS…FEQLVVRILE (197 aa)) constitute an ATP-grasp domain. 134 to 189 (IMQQFKKVMVKPSHEGSSIGMAQASTPQELEDALSNAFKFDSQVLVEQWISGREFT) contacts ATP. Residues Asp-257, Glu-270, and Asn-272 each coordinate Mg(2+).

It belongs to the D-alanine--D-alanine ligase family. The cofactor is Mg(2+). Requires Mn(2+) as cofactor.

The protein localises to the cytoplasm. The enzyme catalyses 2 D-alanine + ATP = D-alanyl-D-alanine + ADP + phosphate + H(+). It participates in cell wall biogenesis; peptidoglycan biosynthesis. Cell wall formation. This is D-alanine--D-alanine ligase from Pseudoalteromonas translucida (strain TAC 125).